The sequence spans 333 residues: MTIRVAINGFGRIGRNVLRAIVESGRTDIEVVAINDLGQVETNAHLLRFDSVHGRFPAKVTSGDDWIDVGRGPIKVTAIRNPAELPWAGVDMAMECTGIFTTKEKAAAHLQNGAKRVLVSAPCDGADRTIVYGVNHATLTADDLVVSNASCTTNCLSPVAKVLHDAIGIAKGFMTTIHSYTGDQPTLDTMHKDLYRARAAALSMIPTSTGAAKAVGLVLPELKGRLDGVSIRVPTPNVSVVDLVFEAARDTTVEEVNAAIEAAACGPLKGVLGFTTEPNVSSDFNHDPHSSVFHMDQTKVMEGRMVRILSWYDNEWGFSNRMADTAVAMGRLL.

NAD(+)-binding positions include 12–13 (RI), aspartate 36, arginine 80, and serine 120. D-glyceraldehyde 3-phosphate contacts are provided by residues 150-152 (SCT), threonine 181, arginine 196, 209-210 (TG), and arginine 232. Cysteine 151 serves as the catalytic Nucleophile. Asparagine 314 provides a ligand contact to NAD(+).

It belongs to the glyceraldehyde-3-phosphate dehydrogenase family. As to quaternary structure, homotetramer.

It localises to the cytoplasm. The enzyme catalyses D-glyceraldehyde 3-phosphate + phosphate + NAD(+) = (2R)-3-phospho-glyceroyl phosphate + NADH + H(+). The protein operates within carbohydrate degradation; glycolysis; pyruvate from D-glyceraldehyde 3-phosphate: step 1/5. Its function is as follows. Catalyzes the oxidative phosphorylation of glyceraldehyde 3-phosphate (G3P) to 1,3-bisphosphoglycerate (BPG) using the cofactor NAD. The first reaction step involves the formation of a hemiacetal intermediate between G3P and a cysteine residue, and this hemiacetal intermediate is then oxidized to a thioester, with concomitant reduction of NAD to NADH. The reduced NADH is then exchanged with the second NAD, and the thioester is attacked by a nucleophilic inorganic phosphate to produce BPG. The polypeptide is Glyceraldehyde-3-phosphate dehydrogenase (gapB) (Cereibacter sphaeroides (Rhodobacter sphaeroides)).